A 1031-amino-acid polypeptide reads, in one-letter code: Beta-galactosidase (1031 aa).

Residues Asn100 and Asp198 each contribute to the substrate site. Asp198 is a Na(+) binding site. Mg(2+) contacts are provided by Glu412, His414, and Glu457. Substrate contacts are provided by residues Glu457 and 533–536 (EYAH). Glu457 functions as the Proton donor in the catalytic mechanism. Residue Glu533 is the Nucleophile of the active site. Asn593 is a binding site for Mg(2+). Na(+)-binding residues include Phe597 and Asn600. Positions 600 and 1005 each coordinate substrate.

Belongs to the glycosyl hydrolase 2 family. In terms of assembly, homotetramer. Requires Mg(2+) as cofactor. Na(+) is required as a cofactor.

It catalyses the reaction Hydrolysis of terminal non-reducing beta-D-galactose residues in beta-D-galactosides.. The chain is Beta-galactosidase from Vibrio vulnificus (strain YJ016).